The primary structure comprises 562 residues: Protein TBF1 (562 aa).

The interval 376–414 is disordered; sequence ASMSNSSSGPHSSHNNSSNSNNNGSIGLRKPKAKRTWSK. The span at 377 to 400 shows a compositional bias: low complexity; that stretch reads SMSNSSSGPHSSHNNSSNSNNNGS. An HTH myb-type domain is found at 404–460; the sequence is RKPKAKRTWSKEEEEALVEGLKEVGPSWSKILDLYGPGGKITENLKNRTQVQLKDKA. The H-T-H motif DNA-binding region spans 431–456; that stretch reads WSKILDLYGPGGKITENLKNRTQVQL. The tract at residues 495–562 is disordered; it reads FSQSPNSSTI…GFDPHLEDGM (68 aa). 2 stretches are compositionally biased toward polar residues: residues 496–522 and 532–552; these read SQSP…ATED and GQNS…SDNT.

In terms of assembly, homodimer.

It localises to the nucleus. It is found in the chromosome. The protein resides in the telomere. Binds the telomeric double-stranded TTAGGG repeat and negatively regulates telomere length. Involved in the regulation of gene expression. 52 binding sites have been identified, distributed over 15 chromosomes. A member of the general regulatory factors (GRFs) which act as genome partitioners. Acts as a chromatin insulator which are known as STARs (Subtelomeric anti-silencing region). STARs prevent negative or positive transcription influence by extending across chromatin to a promoter. In Saccharomyces cerevisiae (strain ATCC 204508 / S288c) (Baker's yeast), this protein is Protein TBF1 (TBF1).